The chain runs to 101 residues: Protein translation factor SUI1 homolog (101 aa).

It belongs to the SUI1 family.

This chain is Protein translation factor SUI1 homolog, found in Methanosphaera stadtmanae (strain ATCC 43021 / DSM 3091 / JCM 11832 / MCB-3).